The sequence spans 423 residues: Gamma-glutamyl phosphate reductase (423 aa).

Belongs to the gamma-glutamyl phosphate reductase family.

It localises to the cytoplasm. It catalyses the reaction L-glutamate 5-semialdehyde + phosphate + NADP(+) = L-glutamyl 5-phosphate + NADPH + H(+). It functions in the pathway amino-acid biosynthesis; L-proline biosynthesis; L-glutamate 5-semialdehyde from L-glutamate: step 2/2. Its function is as follows. Catalyzes the NADPH-dependent reduction of L-glutamate 5-phosphate into L-glutamate 5-semialdehyde and phosphate. The product spontaneously undergoes cyclization to form 1-pyrroline-5-carboxylate. This Pseudomonas putida (strain ATCC 47054 / DSM 6125 / CFBP 8728 / NCIMB 11950 / KT2440) protein is Gamma-glutamyl phosphate reductase.